The following is a 75-amino-acid chain: Sec-independent protein translocase protein TatA (75 aa).

Residues 1-21 (MGSFSIWHWLVVLAIVLLVFG) traverse the membrane as a helical segment. Positions 41–75 (KGMRDEDKPNAQLGDESRTQDASRTAQDEHDRNAR) are disordered.

Belongs to the TatA/E family. As to quaternary structure, the Tat system comprises two distinct complexes: a TatABC complex, containing multiple copies of TatA, TatB and TatC subunits, and a separate TatA complex, containing only TatA subunits. Substrates initially bind to the TatABC complex, which probably triggers association of the separate TatA complex to form the active translocon.

It localises to the cell inner membrane. Functionally, part of the twin-arginine translocation (Tat) system that transports large folded proteins containing a characteristic twin-arginine motif in their signal peptide across membranes. TatA could form the protein-conducting channel of the Tat system. The polypeptide is Sec-independent protein translocase protein TatA (Stenotrophomonas maltophilia (strain K279a)).